Reading from the N-terminus, the 506-residue chain is NAD(P)H-quinone oxidoreductase subunit 2 (506 aa).

Transmembrane regions (helical) follow at residues 14 to 34, 42 to 62, 79 to 99, 108 to 128, 132 to 152, 167 to 187, 206 to 226, 240 to 260, 276 to 296, 302 to 322, 330 to 350, 374 to 394, and 409 to 429; these read AIIP…VDLA, WAPS…TLQW, LAIA…LISW, PIGE…LLCG, LISV…LSGY, LLVG…LYGL, FITS…IAAV, PTPV…AFAI, LLFT…ALAQ, MLAY…VSGT, VLYL…VILF, LGLS…GFFG, and LLVI…ISVI.

Belongs to the complex I subunit 2 family. In terms of assembly, NDH-1 can be composed of about 15 different subunits; different subcomplexes with different compositions have been identified which probably have different functions.

Its subcellular location is the cellular thylakoid membrane. The enzyme catalyses a plastoquinone + NADH + (n+1) H(+)(in) = a plastoquinol + NAD(+) + n H(+)(out). The catalysed reaction is a plastoquinone + NADPH + (n+1) H(+)(in) = a plastoquinol + NADP(+) + n H(+)(out). In terms of biological role, NDH-1 shuttles electrons from an unknown electron donor, via FMN and iron-sulfur (Fe-S) centers, to quinones in the respiratory and/or the photosynthetic chain. The immediate electron acceptor for the enzyme in this species is believed to be plastoquinone. Couples the redox reaction to proton translocation, and thus conserves the redox energy in a proton gradient. Cyanobacterial NDH-1 also plays a role in inorganic carbon-concentration. This is NAD(P)H-quinone oxidoreductase subunit 2 from Prochlorococcus marinus (strain MIT 9301).